The primary structure comprises 139 residues: MPDAKTKTTDDKVIKSEEQWRRELSPIQYAVLREKATERPFSGEYEHDHRAGTYVCAGCGNVLFESDAKFDSGCGWPSFTQPAVESHVDEERDVSHGMIRTEVLCAKCSGHLGHVFPDGPGPTGLRYCINSAALKLEPK.

The MsrB domain occupies 17–139 (EEQWRRELSP…NSAALKLEPK (123 aa)). 4 residues coordinate Zn(2+): Cys-56, Cys-59, Cys-105, and Cys-108. Cys-128 acts as the Nucleophile in catalysis.

Belongs to the MsrB Met sulfoxide reductase family. Requires Zn(2+) as cofactor.

The catalysed reaction is L-methionyl-[protein] + [thioredoxin]-disulfide + H2O = L-methionyl-(R)-S-oxide-[protein] + [thioredoxin]-dithiol. The protein is Peptide methionine sulfoxide reductase MsrB of Bradyrhizobium diazoefficiens (strain JCM 10833 / BCRC 13528 / IAM 13628 / NBRC 14792 / USDA 110).